The chain runs to 541 residues: Transmembrane protein 151 homolog (541 aa).

Transmembrane regions (helical) follow at residues 27 to 47 (GYGK…YATF), 73 to 93 (YNFV…MECW), and 254 to 274 (PWFL…SWPL). The segment at 503-541 (ASISHSSSKDLKSLTLKSSSSNNNNNNSNNNNNDDPEHP) is disordered. Residues 515-535 (SLTLKSSSSNNNNNNSNNNNN) are compositionally biased toward low complexity.

It belongs to the TMEM151 family.

It is found in the membrane. The polypeptide is Transmembrane protein 151 homolog (Caenorhabditis elegans).